The following is a 255-amino-acid chain: 4-diphosphocytidyl-2-C-methyl-D-erythritol kinase (255 aa).

Lysine 6 is an active-site residue. 95-105 (PVCAGLGGGSS) is an ATP binding site. Residue aspartate 137 is part of the active site.

The protein belongs to the GHMP kinase family. IspE subfamily.

It catalyses the reaction 4-CDP-2-C-methyl-D-erythritol + ATP = 4-CDP-2-C-methyl-D-erythritol 2-phosphate + ADP + H(+). It participates in isoprenoid biosynthesis; isopentenyl diphosphate biosynthesis via DXP pathway; isopentenyl diphosphate from 1-deoxy-D-xylulose 5-phosphate: step 3/6. Its function is as follows. Catalyzes the phosphorylation of the position 2 hydroxy group of 4-diphosphocytidyl-2C-methyl-D-erythritol. The sequence is that of 4-diphosphocytidyl-2-C-methyl-D-erythritol kinase from Campylobacter jejuni subsp. doylei (strain ATCC BAA-1458 / RM4099 / 269.97).